The chain runs to 1273 residues: Receptor-type tyrosine-protein phosphatase C (1273 aa).

A signal peptide spans 1 to 23 (MYLWLKLLAFSLALLGPEVFVTG). Residues 24 to 546 (QGTTDDGLDT…KPQSTSYNSK (523 aa)) are Extracellular-facing. The tract at residues 45–192 (LPARTTEFTP…TEIATPQTKP (148 aa)) is disordered. Polar residues-rich tracts occupy residues 50 to 77 (TEFTPPSISERGNGSSETTYLPGFSSTL), 84 to 111 (QPDSQTPSARGADTQTLSSQADLTTLTA), and 141 to 192 (RNST…QTKP). N-linked (GlcNAc...) asparagine glycosylation is present at Asn62. Asn142, Asn153, Asn164, Asn178, Asn200, Asn245, Asn250, Asn271, Asn282, Asn327, Asn333, Asn371, Asn374, Asn471, and Asn502 each carry an N-linked (GlcNAc...) asparagine glycan. 2 Fibronectin type-III domains span residues 361 to 452 (PEML…TKAA) and 453 to 545 (RPGK…SYNS). A helical membrane pass occupies residues 547-567 (ALIIFLVFLIIVTSIALLVVL). Residues 568–1273 (YKIYDLRKKR…PMSPALTPSS (706 aa)) lie on the Cytoplasmic side of the membrane. Tyrosine-protein phosphatase domains follow at residues 622 to 881 (FLAE…LVEY) and 913 to 1196 (LEAE…MASI). Phosphotyrosine is present on Tyr652. Residues Asp790, 822–828 (CSAGVGR), and Gln866 each bind substrate. Catalysis depends on Cys822, which acts as the Phosphocysteine intermediate. 7 positions are modified to phosphoserine: Ser944, Ser963, Ser966, Ser970, Ser973, Ser974, and Ser978. A disordered region spans residues 960–984 (LEMSKESEAESDESSDEDSDSEETS). The segment covering 968-981 (AESDESSDEDSDSE) has biased composition (acidic residues). Cys1137 serves as the catalytic Phosphocysteine intermediate. Phosphoserine is present on residues Ser1209 and Ser1266. The interval 1219–1273 (VDGAKQDANCVQPADPLNKAQEDSKEVGASEPASGSEEPEHSANGPMSPALTPSS) is disordered.

Belongs to the protein-tyrosine phosphatase family. Receptor class 1/6 subfamily. As to quaternary structure, interacts with SKAP1. Interacts with DPP4; the interaction is enhanced in an interleukin-12-dependent manner in activated lymphocytes. Binds GANAB and PRKCSH. Interacts with CD53; this interaction stabilizes PTPRC on the membrane and is required for optimal phosphatase activity. Interacts with CLEC10A. Heavily N- and O-glycosylated. In terms of processing, the cytoplasmic domain contains potential phosphorylation sites. Isoform 1 and isoform 2 are found in thymocyte and lymph node. Isoform 4 and isoform 3 are found in the lymph nod.

It localises to the cell membrane. Its subcellular location is the membrane raft. It is found in the synapse. The enzyme catalyses O-phospho-L-tyrosyl-[protein] + H2O = L-tyrosyl-[protein] + phosphate. Functionally, protein tyrosine-protein phosphatase required for T-cell activation through the antigen receptor. Acts as a positive regulator of T-cell coactivation upon binding to DPP4. The first PTPase domain has enzymatic activity, while the second one seems to affect the substrate specificity of the first one. Upon T-cell activation, recruits and dephosphorylates SKAP1 and FYN. Dephosphorylates LYN, and thereby modulates LYN activity. Interacts with CLEC10A at antigen presenting cell-T cell contact; CLEC10A on immature dendritic cells recognizes Tn antigen-carrying PTPRC/CD45 receptor on effector T cells and modulates T cell activation threshold to limit autoreactivity. The sequence is that of Receptor-type tyrosine-protein phosphatase C (Ptprc) from Rattus norvegicus (Rat).